The primary structure comprises 215 residues: Ribonuclease S-6 (215 aa).

A signal peptide spans 1–22 (MFNLPLTSVFVIFLFALSPIYG). Residue glutamine 32 coordinates RNA. An intrachain disulfide couples cysteine 38 to cysteine 43. Residue asparagine 49 is glycosylated (N-linked (GlcNAc...) asparagine). Residue histidine 53 participates in RNA binding. Histidine 53 functions as the Proton donor in the catalytic mechanism. Asparagine 59 is a glycosylation site (N-linked (GlcNAc...) asparagine). A disulfide bridge links cysteine 67 with cysteine 116. RNA-binding positions include 91–92 (DL), arginine 94, phenylalanine 105, 108–109 (RE), and 112–113 (KH). The active site involves glutamate 109. The Proton acceptor role is filled by histidine 113. N-linked (GlcNAc...) asparagine glycosylation is found at asparagine 160 and asparagine 172. Disulfide bonds link cysteine 175–cysteine 204 and cysteine 187–cysteine 198.

Belongs to the RNase T2 family.

It is found in the secreted. It localises to the extracellular space. The enzyme catalyses a ribonucleotidyl-ribonucleotide-RNA + H2O = a 3'-end 3'-phospho-ribonucleotide-RNA + a 5'-end dephospho-ribonucleoside-RNA + H(+). Self-incompatibility (SI) is the inherited ability of a flowering plant to prevent self-fertilization by discriminating between self and non-self pollen during pollination. In many species of the Solanaceae, self-incompatibility is controlled by the single, multiallelic locus S. This stylar glycoprotein is associated with expression of self-incompatibility in potato. The polypeptide is Ribonuclease S-6 (Nicotiana alata (Winged tobacco)).